The sequence spans 513 residues: Maturase K (513 aa).

It belongs to the intron maturase 2 family. MatK subfamily.

The protein resides in the plastid. It localises to the chloroplast. Its function is as follows. Usually encoded in the trnK tRNA gene intron. Probably assists in splicing its own and other chloroplast group II introns. The sequence is that of Maturase K from Zea mays (Maize).